We begin with the raw amino-acid sequence, 224 residues long: ATP phosphoribosyltransferase (224 aa).

Belongs to the ATP phosphoribosyltransferase family. Short subfamily. As to quaternary structure, heteromultimer composed of HisG and HisZ subunits.

It is found in the cytoplasm. The catalysed reaction is 1-(5-phospho-beta-D-ribosyl)-ATP + diphosphate = 5-phospho-alpha-D-ribose 1-diphosphate + ATP. It functions in the pathway amino-acid biosynthesis; L-histidine biosynthesis; L-histidine from 5-phospho-alpha-D-ribose 1-diphosphate: step 1/9. Functionally, catalyzes the condensation of ATP and 5-phosphoribose 1-diphosphate to form N'-(5'-phosphoribosyl)-ATP (PR-ATP). Has a crucial role in the pathway because the rate of histidine biosynthesis seems to be controlled primarily by regulation of HisG enzymatic activity. The chain is ATP phosphoribosyltransferase from Cupriavidus taiwanensis (strain DSM 17343 / BCRC 17206 / CCUG 44338 / CIP 107171 / LMG 19424 / R1) (Ralstonia taiwanensis (strain LMG 19424)).